The primary structure comprises 150 residues: Ribosomal RNA large subunit methyltransferase H (150 aa).

Residues Ala100 and 118-123 (LSEMTF) each bind S-adenosyl-L-methionine.

The protein belongs to the RNA methyltransferase RlmH family. In terms of assembly, homodimer.

It is found in the cytoplasm. The catalysed reaction is pseudouridine(1915) in 23S rRNA + S-adenosyl-L-methionine = N(3)-methylpseudouridine(1915) in 23S rRNA + S-adenosyl-L-homocysteine + H(+). Its function is as follows. Specifically methylates the pseudouridine at position 1915 (m3Psi1915) in 23S rRNA. This Helicobacter pylori (strain P12) protein is Ribosomal RNA large subunit methyltransferase H.